The sequence spans 900 residues: Alanine--tRNA ligase (900 aa).

4 residues coordinate Zn(2+): H604, H608, C708, and H712.

It belongs to the class-II aminoacyl-tRNA synthetase family. Requires Zn(2+) as cofactor.

It is found in the cytoplasm. It catalyses the reaction tRNA(Ala) + L-alanine + ATP = L-alanyl-tRNA(Ala) + AMP + diphosphate. In terms of biological role, catalyzes the attachment of alanine to tRNA(Ala) in a two-step reaction: alanine is first activated by ATP to form Ala-AMP and then transferred to the acceptor end of tRNA(Ala). Also edits incorrectly charged Ser-tRNA(Ala) and Gly-tRNA(Ala) via its editing domain. The protein is Alanine--tRNA ligase of Saccharolobus islandicus (strain L.S.2.15 / Lassen #1) (Sulfolobus islandicus).